The primary structure comprises 102 residues: uncharacterized protein (102 aa).

The chain crosses the membrane as a helical span at residues 77 to 96; sequence FFSACVAKSYSSFFISICIL.

The protein localises to the membrane. This is an uncharacterized protein from Saccharomyces cerevisiae (strain ATCC 204508 / S288c) (Baker's yeast).